Reading from the N-terminus, the 130-residue chain is GKVYGRCELAAAMKRMGLDNYRGYSLGNWVCAAKFESNFNTGATNRNTDGSTDYGILQINSRWWCNDGRTPGSKNLCHIPCSALLSSDITASVNCAKKIVSDGDGMNAWVAWRKHCKGTDVNVWIRGCRL.

The region spanning 2 to 130 (KVYGRCELAA…VNVWIRGCRL (129 aa)) is the C-type lysozyme domain. Disulfide bonds link Cys-7–Cys-128, Cys-31–Cys-116, Cys-65–Cys-81, and Cys-77–Cys-95. Catalysis depends on residues Glu-36 and Asp-53.

Belongs to the glycosyl hydrolase 22 family. In terms of assembly, monomer.

The protein resides in the secreted. It catalyses the reaction Hydrolysis of (1-&gt;4)-beta-linkages between N-acetylmuramic acid and N-acetyl-D-glucosamine residues in a peptidoglycan and between N-acetyl-D-glucosamine residues in chitodextrins.. Lysozymes have primarily a bacteriolytic function; those in tissues and body fluids are associated with the monocyte-macrophage system and enhance the activity of immunoagents. This is Lysozyme C (LYZ) from Phasianus versicolor (Green pheasant).